A 314-amino-acid chain; its full sequence is Deoxymugineic acid synthase 1-D (314 aa).

Residues 1 to 21 (MGAGEKTAAGMPRIGMGTAVQ) are disordered. NADP(+) is bound at residue D44. Residue Y49 is the Proton donor of the active site. H112 contacts substrate. Residues 158-159 (AN), Q180, 258-266 (FDEARMREN), and 273-281 (ELTEEERLR) contribute to the NADP(+) site.

This sequence belongs to the aldo/keto reductase family. In terms of tissue distribution, mostly expressed in root tissues, observed, at low levels, in mesocotyl and embryonic roots, seedling roots, crown and seedling leafes, mature bracts, anthers, pistil, caryopsis and embryos.

It carries out the reaction 2'-deoxymugineate + NAD(+) = 3''-deamino-3''-oxonicotianamine + NADH + H(+). It catalyses the reaction 2'-deoxymugineate + NADP(+) = 3''-deamino-3''-oxonicotianamine + NADPH + H(+). It functions in the pathway siderophore biosynthesis. Its function is as follows. Catalyzes the reduction of a 3''-keto intermediate during the biosynthesis of 2'-deoxymugineic acid (DMA) from L-Met. Involved in the formation of phytosiderophores (MAs) belonging to the mugineic acid family and required to acquire iron. The polypeptide is Deoxymugineic acid synthase 1-D (Triticum aestivum (Wheat)).